The primary structure comprises 417 residues: MLKREMNIADYDADLWRAMEQEVVRQEEHIELIASENYTSPRVMQAQGSQLTNKYAEGYPGKRYYGGCEYVDIVEQLAIDRAKELFGADYANVQPHSGSQANVAVYSALLQPGDTVLGMNLAHGGHLTHGSPVNFSGKLYNIVPYGIDESGKIDYEDMASQAERYKPKMIIGGFSAYSGIVDWAKMREIADSIGAYFFVDMAHVAGLVAAGVYPNPVPHAHVVTTTTHKTLAGPRGGLILARGGDEELYKKLNSSVFPANQGGPLMHVIAGKAVALKEAMEPEFKVYQQQVAKNAKAMVAVFLERGYKVVSGGTDNHLFLLDLVDKNITGKDADAALGRANITVNKNSVPNDPKSPFVTSGVRIGSPAITRRGFKEEESRELAGWMCDVLDNITDEATIERIKQKVLAICARFPVYA.

(6S)-5,6,7,8-tetrahydrofolate contacts are provided by residues leucine 121 and 125-127; that span reads GHL. The residue at position 229 (lysine 229) is an N6-(pyridoxal phosphate)lysine. A (6S)-5,6,7,8-tetrahydrofolate-binding site is contributed by 355–357; that stretch reads SPF.

Belongs to the SHMT family. As to quaternary structure, homodimer. The cofactor is pyridoxal 5'-phosphate.

The protein localises to the cytoplasm. It catalyses the reaction (6R)-5,10-methylene-5,6,7,8-tetrahydrofolate + glycine + H2O = (6S)-5,6,7,8-tetrahydrofolate + L-serine. Its pathway is one-carbon metabolism; tetrahydrofolate interconversion. It functions in the pathway amino-acid biosynthesis; glycine biosynthesis; glycine from L-serine: step 1/1. In terms of biological role, catalyzes the reversible interconversion of serine and glycine with tetrahydrofolate (THF) serving as the one-carbon carrier. This reaction serves as the major source of one-carbon groups required for the biosynthesis of purines, thymidylate, methionine, and other important biomolecules. Also exhibits THF-independent aldolase activity toward beta-hydroxyamino acids, producing glycine and aldehydes, via a retro-aldol mechanism. The sequence is that of Serine hydroxymethyltransferase from Yersinia enterocolitica serotype O:8 / biotype 1B (strain NCTC 13174 / 8081).